The sequence spans 634 residues: MSTEISTRGRQRAIGHEEYSLYSSLSEEELVQMAIEQSLADKTRGPTPAETSVSSQTNHQPGHIHPWTRSSSPPESPPARAPLGLFQGVMQKYSSNLFKTSQMAAMDPVLKAIKEGDEEALKAMIQDGKNLAEPNKEGWLPLHEAAYYGKLGCLKVLQRAYPGTIDQRTLQEETALYLATCREHLDCLLSLLQAGAEPDISNKSRETPLYKACERKNAEAVRILVQYNADANHRCNRGWTALHESVSRNDLEVMEILVSGGAKVEAKNVYSITPLFVAAQSGQLEALRFLAKHGADINTQASDSASALYEACKNEHEDVVEFLLSQGADANKANKDGLLPLHVASKKGNYRIVQMLLPVTSRTRVRRSGISPLHLAAERNHDAVLEALLAARFDVNTPLAPERARLYEDRRTSALYFAVVNNNVYATELLLLAGADPNRDVISPLLVAIRHGCLRTMQLLLDHGANIDAYIATHPTAFPATIMFAMKCLSLLKFLMDLGCDGEPCFSCLYGNGPHPPAPRSGRFNDAPVDDKAPSVVQFCEFLSAPEVSRWAGPIIDVLLDYVGNVQLCSRLKEHIDSFEDWAVIKEKAEPPRPLAHLCRLRVRKAIGKYRIKLLDTLPLPGRLIRYLKYENTQ.

The UIM domain occupies 26–45; sequence SEEELVQMAIEQSLADKTRG. Residues 35-81 form a disordered region; sequence IEQSLADKTRGPTPAETSVSSQTNHQPGHIHPWTRSSSPPESPPARA. Residues 49 to 60 are compositionally biased toward polar residues; the sequence is AETSVSSQTNHQ. 12 ANK repeats span residues 104–133, 137–167, 171–200, 204–233, 237–266, 270–299, 303–332, 336–365, 368–397, 410–439, 440–469, and 476–504; these read AAMDPVLKAIKEGDEEALKAMIQDGKNLAE, EGWLPLHEAAYYGKLGCLKVLQRAYPGTIDQ, QEETALYLATCREHLDCLLSLLQAGAEPDI, SRETPLYKACERKNAEAVRILVQYNADANH, RGWTALHESVSRNDLEVMEILVSGGAKVEA, YSITPLFVAAQSGQLEALRFLAKHGADINT, DSASALYEACKNEHEDVVEFLLSQGADANK, DGLLPLHVASKKGNYRIVQMLLPVTSRTRV, SGISPLHLAAERNHDAVLEALLAARFDVNT, RRTSALYFAVVNNNVYATELLLLAGADPNR, DVISPLLVAIRHGCLRTMQLLLDHGANIDA, and TAFPATIMFAMKCLSLLKFLMDLGCDGEP. Position 371 is a phosphoserine (Ser371). Positions 580 to 634 constitute an SOCS box domain; that stretch reads EDWAVIKEKAEPPRPLAHLCRLRVRKAIGKYRIKLLDTLPLPGRLIRYLKYENTQ.

The protein belongs to the ankyrin SOCS box (ASB) family. As to quaternary structure, component of a probable ECS E3 ubiquitin-protein ligase complex which contains CUL5, either RBX1 or RNF7/RBX2, Elongin BC complex (ELOB and ELOC) and ASB2. Interacts with SKP2. Through its interaction with SKP2, likely to bridge the formation of dimeric E3-ubiquitin-protein ligase complexes composed of an ECS complex and an SCF(SKP2) complex. Interacts with JAK2; the interaction targets JAK2 for Notch-mediated proteasomal degradation. Interacts with TCF3/E2A; the interaction is mediated by SKP2 and targets TCF3 for Notch-mediated proteasomal degradation. Interacts with DES. Monoubiquitinated.

The protein localises to the cytoplasm. The protein resides in the cytoskeleton. Its subcellular location is the stress fiber. It is found in the myofibril. It localises to the sarcomere. The protein localises to the z line. The protein operates within protein modification; protein ubiquitination. Functionally, substrate-recognition component of a SCF-like ECS (Elongin-Cullin-SOCS-box protein) E3 ubiquitin-protein ligase complex which mediates the ubiquitination and subsequent proteasomal degradation of target proteins. Mediates Notch-induced ubiquitination and degradation of substrates including E2A and JAK2. Required during embryonic heart development for complete heart looping. Required for cardiomyocyte differentiation. Involved in myogenic differentiation and targets filamin FLNB for proteasomal degradation but not filamin FLNA. Also targets DES for proteasomal degradation. Acts as a negative regulator of skeletal muscle mass. This Rattus norvegicus (Rat) protein is Ankyrin repeat and SOCS box protein 2.